The following is an 83-amino-acid chain: Alpha-neurotoxin NTX-4 (83 aa).

The N-terminal stretch at 1–21 (MKTLLLTLLVVTIVCLDLGYT) is a signal peptide. 4 disulfides stabilise this stretch: C24–C45, C38–C62, C64–C75, and C76–C81.

The protein belongs to the three-finger toxin family. Short-chain subfamily. Type I alpha-neurotoxin sub-subfamily. Expressed by the venom gland.

Its subcellular location is the secreted. Its function is as follows. Binds to muscle nicotinic acetylcholine receptor (nAChR) and inhibit acetylcholine from binding to the receptor, thereby impairing neuromuscular transmission. The polypeptide is Alpha-neurotoxin NTX-4 (Naja sputatrix (Malayan spitting cobra)).